Reading from the N-terminus, the 248-residue chain is UPF0246 protein lp_0089 (248 aa).

This sequence belongs to the UPF0246 family.

The protein is UPF0246 protein lp_0089 of Lactiplantibacillus plantarum (strain ATCC BAA-793 / NCIMB 8826 / WCFS1) (Lactobacillus plantarum).